Here is a 447-residue protein sequence, read N- to C-terminus: UDP-N-acetylmuramoyl-L-alanyl-D-glutamate--2,6-diaminopimelate ligase (447 aa).

Threonine 21 lines the UDP-N-acetyl-alpha-D-muramoyl-L-alanyl-D-glutamate pocket. 74 to 80 serves as a coordination point for ATP; it reads GTNGKTT. UDP-N-acetyl-alpha-D-muramoyl-L-alanyl-D-glutamate is bound by residues 117 to 118, serine 144, glutamine 150, and arginine 152; that span reads TT. N6-carboxylysine is present on lysine 184. Meso-2,6-diaminopimelate-binding positions include arginine 340, 364 to 367, glycine 415, and glutamate 419; that span reads DNPR. Residues 364-367 carry the Meso-diaminopimelate recognition motif motif; the sequence is DNPR.

This sequence belongs to the MurCDEF family. MurE subfamily. It depends on Mg(2+) as a cofactor. Post-translationally, carboxylation is probably crucial for Mg(2+) binding and, consequently, for the gamma-phosphate positioning of ATP.

The protein localises to the cytoplasm. The enzyme catalyses UDP-N-acetyl-alpha-D-muramoyl-L-alanyl-D-glutamate + meso-2,6-diaminopimelate + ATP = UDP-N-acetyl-alpha-D-muramoyl-L-alanyl-gamma-D-glutamyl-meso-2,6-diaminopimelate + ADP + phosphate + H(+). Its pathway is cell wall biogenesis; peptidoglycan biosynthesis. Its function is as follows. Catalyzes the addition of meso-diaminopimelic acid to the nucleotide precursor UDP-N-acetylmuramoyl-L-alanyl-D-glutamate (UMAG) in the biosynthesis of bacterial cell-wall peptidoglycan. This chain is UDP-N-acetylmuramoyl-L-alanyl-D-glutamate--2,6-diaminopimelate ligase, found in Helicobacter pylori (strain J99 / ATCC 700824) (Campylobacter pylori J99).